A 434-amino-acid polypeptide reads, in one-letter code: Protein maelstrom homolog (434 aa).

Positions 4–73 (RRGSRNAYYF…AQGKDAGPWE (70 aa)) form a DNA-binding region, HMG box. A disordered region spans residues 357-387 (SHFSSSNQEQRSNTPTGDYPSGVKISGQSSS). The segment covering 363–372 (NQEQRSNTPT) has biased composition (polar residues).

This sequence belongs to the maelstrom family. In terms of assembly, interacts with SMARCB1, SIN3B and DDX4. Interacts with piRNA-associated proteins TDRD1, PIWIL1 and PIWIL2. Interacts with TEX19.

It is found in the cytoplasm. It localises to the nucleus. Its function is as follows. Plays a central role during spermatogenesis by repressing transposable elements and preventing their mobilization, which is essential for the germline integrity. Acts via the piRNA metabolic process, which mediates the repression of transposable elements during meiosis by forming complexes composed of piRNAs and Piwi proteins and governs the methylation and subsequent repression of transposons. Its association with piP-bodies suggests a participation in the secondary piRNAs metabolic process. Required for the localization of germ-cell factors to the meiotic nuage. The sequence is that of Protein maelstrom homolog (MAEL) from Sus scrofa (Pig).